We begin with the raw amino-acid sequence, 98 residues long: Large ribosomal subunit protein uL23 (98 aa).

It belongs to the universal ribosomal protein uL23 family. As to quaternary structure, part of the 50S ribosomal subunit. Contacts protein L29, and trigger factor when it is bound to the ribosome.

In terms of biological role, one of the early assembly proteins it binds 23S rRNA. One of the proteins that surrounds the polypeptide exit tunnel on the outside of the ribosome. Forms the main docking site for trigger factor binding to the ribosome. The protein is Large ribosomal subunit protein uL23 of Bordetella petrii (strain ATCC BAA-461 / DSM 12804 / CCUG 43448).